Here is a 491-residue protein sequence, read N- to C-terminus: Ketol-acid reductoisomerase (NADP(+)) (491 aa).

A KARI N-terminal Rossmann domain is found at 15–208 (AQLGKCRFMG…GGHRAGVLES (194 aa)). NADP(+) contacts are provided by residues 45-48 (CGAQ), arginine 68, arginine 76, serine 78, and 108-110 (DKQ). Residue histidine 132 is part of the active site. Glycine 158 serves as a coordination point for NADP(+). KARI C-terminal knotted domains follow at residues 209 to 344 (SFVA…TAPQ) and 345 to 484 (YEGK…MTDM). Aspartate 217, glutamate 221, glutamate 389, and glutamate 393 together coordinate Mg(2+). Serine 414 is a substrate binding site.

This sequence belongs to the ketol-acid reductoisomerase family. Mg(2+) is required as a cofactor.

The catalysed reaction is (2R)-2,3-dihydroxy-3-methylbutanoate + NADP(+) = (2S)-2-acetolactate + NADPH + H(+). It catalyses the reaction (2R,3R)-2,3-dihydroxy-3-methylpentanoate + NADP(+) = (S)-2-ethyl-2-hydroxy-3-oxobutanoate + NADPH + H(+). The protein operates within amino-acid biosynthesis; L-isoleucine biosynthesis; L-isoleucine from 2-oxobutanoate: step 2/4. It functions in the pathway amino-acid biosynthesis; L-valine biosynthesis; L-valine from pyruvate: step 2/4. Involved in the biosynthesis of branched-chain amino acids (BCAA). Catalyzes an alkyl-migration followed by a ketol-acid reduction of (S)-2-acetolactate (S2AL) to yield (R)-2,3-dihydroxy-isovalerate. In the isomerase reaction, S2AL is rearranged via a Mg-dependent methyl migration to produce 3-hydroxy-3-methyl-2-ketobutyrate (HMKB). In the reductase reaction, this 2-ketoacid undergoes a metal-dependent reduction by NADPH to yield (R)-2,3-dihydroxy-isovalerate. The polypeptide is Ketol-acid reductoisomerase (NADP(+)) (Citrobacter koseri (strain ATCC BAA-895 / CDC 4225-83 / SGSC4696)).